Reading from the N-terminus, the 399-residue chain is Yellow-related salivary protein LJM11 (399 aa).

The signal sequence occupies residues 1–18 (MKVFFSIFTLVLFQGTLG). A disulfide bond links cysteine 115 and cysteine 186. Asparagine 213 is a glycosylation site (N-linked (GlcNAc...) asparagine). Cysteine 319 and cysteine 395 are oxidised to a cystine. Residues threonine 345, asparagine 360, and phenylalanine 362 each contribute to the serotonin site.

This sequence belongs to the major royal jelly protein family. As to expression, salivary gland (at protein level).

Its subcellular location is the secreted. Functionally, probably modulates blood feeding of sand flies on vertebrate species by binding and sequestering different mediators involved in the host response. Binds biogenic amines. Binds serotonin with high affinity. Binds adrenaline and noradrenaline. Binds dopamine and octopamine. Poorly binds histamine. Induces a delayed type hypersensitivity response in host tissues. Induces systemic Th1 immune response in the host. Immunogenic; elicits antibody production in the host. Functions as a chemoattractant for host neutrophils; likely acts through a G-protein-coupled receptor and effect is dependent on calcium influx. (Microbial infection) Modulates infection caused by Leishmania species in the host. This is Yellow-related salivary protein LJM11 from Lutzomyia longipalpis (Sand fly).